We begin with the raw amino-acid sequence, 658 residues long: MARLLTSSSALRWGAVSSSQSVGRAYSSGSPDTEYVQRSIVPTMHFQKSLPRLPIPKLEDTIKRYLNAQRPLLDDVQFKKTEQLALNFQNGVGKQLHEELVQQDKQNKHTSYISGPWFDMYLCARESIVLNFNPFISFTPDPRPDYNRQLIRATNMTVSAMRFLKTMRAGYLEPEIFHLNPAKSDTLTFRKLIRFVPSSLSWYGAYMVNAYPLDMSQYFRLFNGTRIPKPNRDELWTDEKGRHLLVLRKGNFYVFDVIDKDGNIVKASEIQAHLQHILSDTTPAPEFPLGYLTSEERNTWAVLRQKLLNNGNQEALAKVDSAVFCLCLDDFPVEDRVSLSHNMLHGSGLNRWFDKSFSIIMTEDGTAAVNFEHSWGDGVAVLRFQNEVFKDSTQRPAISPESCSAPVDSSKAVQRLHFNLDDSLKAAIANAKEKFDTSVNALSIATMEFKKGGKELLKTQKLSPDAVSQLSFQMAFLRQYGKTTATYESCSTAAFKHGRTETVRPASIYTKKCSEAFVMHPSKHSPAELRSMLQDCSKYHGQLTKEAAMGQGFDRHLFALRYLASSKGLSLPEIYQDASYAQINHNVLSTSTLTSPAVQLGGFAPVVPDGFGVGYGVHDDWIGCNVSSYQTRDVRQFVECVHQSLDDIFTVLQDKPIK.

A mitochondrion-targeting transit peptide spans 1–26; that stretch reads MARLLTSSSALRWGAVSSSQSVGRAY. The Mitochondrial matrix segment spans residues 27–179; the sequence is SSGSPDTEYV…GYLEPEIFHL (153 aa). An intramembrane region (note=Mitochondrial inner membrane) is located at residues 180–209; sequence NPAKSDTLTFRKLIRFVPSSLSWYGAYMVN. Residues 210 to 658 are Mitochondrial matrix-facing; sequence AYPLDMSQYF…FTVLQDKPIK (449 aa). Residue His373 is the Proton acceptor of the active site. 453-465 serves as a coordination point for CoA; it reads GKELLKTQKLSPD. (R)-carnitine-binding residues include Tyr487, Ser489, and Thr500.

This sequence belongs to the carnitine/choline acetyltransferase family.

It is found in the mitochondrion inner membrane. It carries out the reaction (R)-carnitine + hexadecanoyl-CoA = O-hexadecanoyl-(R)-carnitine + CoA. The enzyme catalyses octanoyl-CoA + (R)-carnitine = O-octanoyl-(R)-carnitine + CoA. It catalyses the reaction decanoyl-CoA + (R)-carnitine = O-decanoyl-(R)-carnitine + CoA. The catalysed reaction is dodecanoyl-CoA + (R)-carnitine = O-dodecanoyl-R-carnitine + CoA. It carries out the reaction tetradecanoyl-CoA + (R)-carnitine = O-tetradecanoyl-(R)-carnitine + CoA. The enzyme catalyses (R)-carnitine + octadecanoyl-CoA = O-octadecanoyl-(R)-carnitine + CoA. It catalyses the reaction eicosanoyl-CoA + (R)-carnitine = O-eicosanoyl-(R)-carnitine + CoA. The catalysed reaction is (9Z)-tetradecenoyl-CoA + (R)-carnitine = O-(9Z)-tetradecenoyl-(R)-carnitine + CoA. It carries out the reaction (5Z)-tetradecenoyl-CoA + (R)-carnitine = O-(5Z)-tetradecenoyl-(R)-carnitine + CoA. The enzyme catalyses (R)-carnitine + (9Z)-octadecenoyl-CoA = O-(9Z)-octadecenoyl-(R)-carnitine + CoA. It catalyses the reaction 4,8-dimethylnonanoyl-CoA + (R)-carnitine = O-4,8-dimethylnonanoyl-(R)-carnitine + CoA. Its pathway is lipid metabolism; fatty acid beta-oxidation. Involved in the intramitochondrial synthesis of acylcarnitines from accumulated acyl-CoA metabolites. Reconverts acylcarnitines back into the respective acyl-CoA esters that can then undergo beta-oxidation, an essential step for the mitochondrial uptake of long-chain fatty acids and their subsequent beta-oxidation in the mitochondrion. Active with medium (C8-C12) and long-chain (C14-C18) acyl-CoA esters. This chain is Carnitine O-palmitoyltransferase 2, mitochondrial (cpt2), found in Xenopus tropicalis (Western clawed frog).